Consider the following 149-residue polypeptide: Protein SprT-like (149 aa).

A SprT-like domain is found at 5–143; the sequence is DYVKQVSLED…CGLCRGKLLL (139 aa). His64 serves as a coordination point for Zn(2+). The active site involves Glu65. His68 serves as a coordination point for Zn(2+).

This sequence belongs to the SprT family. It depends on Zn(2+) as a cofactor.

It localises to the cytoplasm. This Streptococcus pneumoniae (strain Hungary19A-6) protein is Protein SprT-like.